A 973-amino-acid chain; its full sequence is Leucine--tRNA ligase, chloroplastic/mitochondrial (973 aa).

Residues 126-135 (PSGAGLHVGH) carry the 'HIGH' region motif. The 'KMSKS' region signature appears at 730-734 (KMSKS). Lys733 provides a ligand contact to ATP.

Belongs to the class-I aminoacyl-tRNA synthetase family.

Its subcellular location is the plastid. The protein localises to the chloroplast. It is found in the mitochondrion. The catalysed reaction is tRNA(Leu) + L-leucine + ATP = L-leucyl-tRNA(Leu) + AMP + diphosphate. In terms of biological role, catalyzes the specific attachment of an amino acid to its cognate tRNA in a two step reaction: the amino acid (AA) is first activated by ATP to form AA-AMP and then transferred to the acceptor end of the tRNA. The protein is Leucine--tRNA ligase, chloroplastic/mitochondrial of Arabidopsis thaliana (Mouse-ear cress).